A 97-amino-acid polypeptide reads, in one-letter code: Large ribosomal subunit protein eL21 (97 aa).

Belongs to the eukaryotic ribosomal protein eL21 family.

The polypeptide is Large ribosomal subunit protein eL21 (Methanoculleus marisnigri (strain ATCC 35101 / DSM 1498 / JR1)).